The sequence spans 262 residues: Phosphatidylglycerol--prolipoprotein diacylglyceryl transferase (262 aa).

Transmembrane regions (helical) follow at residues Leu-9–Val-29, Ile-41–Ala-61, Ile-80–Val-100, and Leu-109–Leu-129. Arg-131 contributes to the a 1,2-diacyl-sn-glycero-3-phospho-(1'-sn-glycerol) binding site. The next 3 membrane-spanning stretches (helical) occupy residues Gln-167–Phe-187, Gly-197–Met-217, and Gly-226–Ile-246.

Belongs to the Lgt family.

Its subcellular location is the cell membrane. It catalyses the reaction L-cysteinyl-[prolipoprotein] + a 1,2-diacyl-sn-glycero-3-phospho-(1'-sn-glycerol) = an S-1,2-diacyl-sn-glyceryl-L-cysteinyl-[prolipoprotein] + sn-glycerol 1-phosphate + H(+). The protein operates within protein modification; lipoprotein biosynthesis (diacylglyceryl transfer). Catalyzes the transfer of the diacylglyceryl group from phosphatidylglycerol to the sulfhydryl group of the N-terminal cysteine of a prolipoprotein, the first step in the formation of mature lipoproteins. The sequence is that of Phosphatidylglycerol--prolipoprotein diacylglyceryl transferase from Streptococcus pneumoniae (strain Taiwan19F-14).